A 261-amino-acid polypeptide reads, in one-letter code: 5'-nucleotidase SurE (261 aa).

4 residues coordinate a divalent metal cation: Asp-18, Asp-19, Ser-50, and Asn-102.

Belongs to the SurE nucleotidase family. It depends on a divalent metal cation as a cofactor.

The protein localises to the cytoplasm. The enzyme catalyses a ribonucleoside 5'-phosphate + H2O = a ribonucleoside + phosphate. Functionally, nucleotidase that shows phosphatase activity on nucleoside 5'-monophosphates. The chain is 5'-nucleotidase SurE from Rhodospirillum rubrum (strain ATCC 11170 / ATH 1.1.1 / DSM 467 / LMG 4362 / NCIMB 8255 / S1).